Here is a 570-residue protein sequence, read N- to C-terminus: Molecular chaperone MKKS (570 aa).

192-199 (ERMVLGKS) serves as a coordination point for ATP. Positions 198–370 (KSIIVPLKGQ…FHLLPNEATV (173 aa)) are substrate-binding apical domain.

This sequence belongs to the TCP-1 chaperonin family. In terms of assembly, component of a complex composed at least of MKKS, BBS10, BBS12, TCP1, CCT2, CCT3, CCT4, CCT5 and CCT8. Interacts with STUB1. Interacts with BBS2 (via coiled coil domain). Interacts with CCDC28B. Interacts with BBS12. Interacts with SMARCC1, a component of the SWI/SNF complexes; the interaction takes place predominantly in the cytoplasm and may modulate SMARCC1 location. Interacts with DLEC1. Widely expressed in adult and fetal tissues. Expressed in the developing heart, brain retina, limb buds, as well as in the developing neural tube. Expressed in the embryo in the first and second branchial arches. Expressed in parafin embedded tissue sections of brain, kidney, retina, olfactory epithelium and the ependymal layer of ventricles. Detected only in restricted regions of these tissue sections, including the ciliated border of renal tubules, the connecting cilium and the inner and outer nuclear layers of retina, and the ciliated layer of olfactory epithelia.

The protein localises to the cytoplasm. The protein resides in the cytoskeleton. It is found in the microtubule organizing center. Its subcellular location is the centrosome. It localises to the cytosol. The protein localises to the nucleus. In terms of biological role, probable molecular chaperone that assists the folding of proteins upon ATP hydrolysis. Plays a role in the assembly of BBSome, a complex involved in ciliogenesis regulating transports vesicles to the cilia. May play a role in protein processing in limb, cardiac and reproductive system development. May play a role in cytokinesis. The sequence is that of Molecular chaperone MKKS (Mkks) from Mus musculus (Mouse).